Consider the following 767-residue polypeptide: 5-methyltetrahydropteroyltriglutamate--homocysteine methyltransferase (767 aa).

5-methyltetrahydropteroyltri-L-glutamate is bound by residues 17–20 (RELK) and Lys117. Residues 442 to 444 (IGS) and Glu495 each bind L-homocysteine. Residues 442–444 (IGS) and Glu495 each bind L-methionine. Residues 526–527 (RC) and Trp572 each bind 5-methyltetrahydropteroyltri-L-glutamate. Residue Asp610 participates in L-homocysteine binding. An L-methionine-binding site is contributed by Asp610. 5-methyltetrahydropteroyltri-L-glutamate is bound at residue Glu616. Residues His653, Cys655, and Glu677 each coordinate Zn(2+). The Proton donor role is filled by His706. Cys738 lines the Zn(2+) pocket.

The protein belongs to the vitamin-B12 independent methionine synthase family. The cofactor is Zn(2+).

It catalyses the reaction 5-methyltetrahydropteroyltri-L-glutamate + L-homocysteine = tetrahydropteroyltri-L-glutamate + L-methionine. Its pathway is amino-acid biosynthesis; L-methionine biosynthesis via de novo pathway; L-methionine from L-homocysteine (MetE route): step 1/1. Its function is as follows. Catalyzes the transfer of a methyl group from 5-methyltetrahydrofolate to homocysteine resulting in methionine formation. This chain is 5-methyltetrahydropteroyltriglutamate--homocysteine methyltransferase, found in Bifidobacterium animalis subsp. lactis (strain AD011).